Consider the following 345-residue polypeptide: Succinylglutamate desuccinylase (345 aa).

The Zn(2+) site is built by H64, E67, and H161. Residue E225 is part of the active site.

The protein belongs to the AspA/AstE family. Succinylglutamate desuccinylase subfamily. It depends on Zn(2+) as a cofactor.

It carries out the reaction N-succinyl-L-glutamate + H2O = L-glutamate + succinate. The protein operates within amino-acid degradation; L-arginine degradation via AST pathway; L-glutamate and succinate from L-arginine: step 5/5. In terms of biological role, transforms N(2)-succinylglutamate into succinate and glutamate. This chain is Succinylglutamate desuccinylase, found in Shewanella piezotolerans (strain WP3 / JCM 13877).